The following is a 430-amino-acid chain: Adenylosuccinate synthetase (430 aa).

Residues glycine 12–lysine 18 and glycine 40–threonine 42 contribute to the GTP site. Residue aspartate 13 is the Proton acceptor of the active site. Mg(2+) contacts are provided by aspartate 13 and glycine 40. IMP-binding positions include aspartate 13 to lysine 16, asparagine 38 to histidine 41, threonine 128, arginine 142, glutamine 223, threonine 238, and arginine 302. The active-site Proton donor is histidine 41. Residues serine 330 to aspartate 332 and serine 412 to glycine 414 contribute to the GTP site.

This sequence belongs to the adenylosuccinate synthetase family. Homodimer. The cofactor is Mg(2+).

The protein localises to the cytoplasm. It carries out the reaction IMP + L-aspartate + GTP = N(6)-(1,2-dicarboxyethyl)-AMP + GDP + phosphate + 2 H(+). It participates in purine metabolism; AMP biosynthesis via de novo pathway; AMP from IMP: step 1/2. Functionally, plays an important role in the de novo pathway of purine nucleotide biosynthesis. Catalyzes the first committed step in the biosynthesis of AMP from IMP. This is Adenylosuccinate synthetase from Bacillus subtilis (strain 168).